Here is a 564-residue protein sequence, read N- to C-terminus: Protein CPR-5 (564 aa).

A disordered region spans residues 1–87; sequence MEALLLPPSP…TSNSNSTKRV (87 aa). A compositionally biased stretch (polar residues) spans 12–28; the sequence is PQNQITNPANSKPNHQS. The span at 29 to 38 shows a compositional bias: basic and acidic residues; that stretch reads GDVHKDETMM. Residues 69-84 are compositionally biased toward low complexity; it reads SSSYCSTSSTSNSNST. 5 helical membrane passes run 347 to 367, 411 to 431, 443 to 463, 472 to 492, and 526 to 546; these read IMDW…LGVY, VRVW…TYFL, PISF…KLCV, LWLI…VFTL, and VYVV…FATF.

As to quaternary structure, interacts with SIM and SMR1. As to expression, ubiquitous.

The protein localises to the membrane. Its subcellular location is the nucleus membrane. May play a role in transcriptional processes. Negatively regulates the senescence and chlorotic lesions induced by biotic (e.g. pathogens) and abiotic (e.g. sugars, darkness) agents, probably by controlling programmed cell death (pcd). Negative regulator of plant programmed cell death (PCD) and effector-triggered immunity (ETI). Promotes cell division and endoreduplication (e.g. in trichomes). The polypeptide is Protein CPR-5 (Arabidopsis thaliana (Mouse-ear cress)).